Consider the following 285-residue polypeptide: Probable endonuclease 4 (285 aa).

Zn(2+)-binding residues include H67, H107, E144, D178, H181, H215, D228, H230, and E260.

This sequence belongs to the AP endonuclease 2 family. Zn(2+) serves as cofactor.

The catalysed reaction is Endonucleolytic cleavage to 5'-phosphooligonucleotide end-products.. Its function is as follows. Endonuclease IV plays a role in DNA repair. It cleaves phosphodiester bonds at apurinic or apyrimidinic (AP) sites, generating a 3'-hydroxyl group and a 5'-terminal sugar phosphate. The protein is Probable endonuclease 4 of Chloroflexus aurantiacus (strain ATCC 29366 / DSM 635 / J-10-fl).